The sequence spans 865 residues: Serine/threonine-protein kinase greatwall (865 aa).

Position 1 is an N-acetylmethionine (Met-1). The Protein kinase domain occupies 34-821; sequence FTIVKPISRG…MRELKQHPLF (788 aa). ATP-binding positions include 40 to 48 and Lys-61; that span reads ISRGAFGKV. The Proton acceptor role is filled by Asp-155. Phosphothreonine occurs at positions 206 and 221. 2 positions are modified to phosphoserine: Ser-362 and Ser-442. A Phosphothreonine modification is found at Thr-508. Phosphoserine occurs at positions 545, 619, 644, and 655. Thr-708 bears the Phosphothreonine mark. Ser-711 bears the Phosphoserine mark. Thr-727 is modified (phosphothreonine; by CDK1). Residues 822–865 form the AGC-kinase C-terminal domain; it reads SEVDWENLQHQTMPFVPQPDDETDTSYFEARNNAQHLTISGFSL. Residues Ser-861 and Ser-864 each carry the phosphoserine modification.

Belongs to the protein kinase superfamily. AGC Ser/Thr protein kinase family. In terms of processing, phosphorylation at Thr-727 by CDK1 during M phase activates its kinase activity. Maximum phosphorylation occurs in prometaphase.

Its subcellular location is the cytoplasm. The protein resides in the cytoskeleton. It is found in the microtubule organizing center. It localises to the centrosome. The protein localises to the nucleus. The catalysed reaction is L-seryl-[protein] + ATP = O-phospho-L-seryl-[protein] + ADP + H(+). The enzyme catalyses L-threonyl-[protein] + ATP = O-phospho-L-threonyl-[protein] + ADP + H(+). Functionally, serine/threonine kinase that plays a key role in M phase by acting as a regulator of mitosis entry and maintenance. Acts by promoting the inactivation of protein phosphatase 2A (PP2A) during M phase: does not directly inhibit PP2A but acts by mediating phosphorylation and subsequent activation of ARPP19 and ENSA at 'Ser-62' and 'Ser-67', respectively. ARPP19 and ENSA are phosphatase inhibitors that specifically inhibit the PPP2R2D (PR55-delta) subunit of PP2A. Inactivation of PP2A during M phase is essential to keep cyclin-B1-CDK1 activity high. Following DNA damage, it is also involved in checkpoint recovery by being inhibited. This chain is Serine/threonine-protein kinase greatwall (Mastl), found in Mus musculus (Mouse).